A 147-amino-acid chain; its full sequence is Ubiquitin-conjugating enzyme E2-17 kDa (147 aa).

Positions 1–147 (MALKRINKEL…AREWTRKYAM (147 aa)) constitute a UBC core domain. C85 serves as the catalytic Glycyl thioester intermediate.

This sequence belongs to the ubiquitin-conjugating enzyme family.

The catalysed reaction is S-ubiquitinyl-[E1 ubiquitin-activating enzyme]-L-cysteine + [E2 ubiquitin-conjugating enzyme]-L-cysteine = [E1 ubiquitin-activating enzyme]-L-cysteine + S-ubiquitinyl-[E2 ubiquitin-conjugating enzyme]-L-cysteine.. It functions in the pathway protein modification; protein ubiquitination. Functionally, catalyzes the covalent attachment of ubiquitin to other proteins. Mediates the selective degradation of short-lived and abnormal proteins. Required for proper telomere behavior during cell divisions and possibly for ubiquitination of proteins involved in postmeiotic stages of spermatogenesis. Deletion mutations are lethal in homozygotes. This chain is Ubiquitin-conjugating enzyme E2-17 kDa (eff), found in Drosophila melanogaster (Fruit fly).